Consider the following 450-residue polypeptide: MPSTDTIAAVATAVAPGQGGIAVIRLSGPAAEATGRSVVHCPGRQEWGSHRVVYGHVIDSEGRRLDEVLLLLMRGPRSFTGEDVVEIHCHGGVIAVQRVLEKVLRQPGVRRAQPGEFSQRAVLNGRLDLTRAEAVSELVAARSRRAAELAMAGLDGGIQAEITVLRERLLDQLTELEARVDFEEDLPPLDGEALLQQLQAVRLELQQLVRDGERGDALRQGLRVALVGRPNVGKSSLLNRLSRRERAIVTDLPGTTRDLLESEIVLEGVPITLLDTAGIRSTDDAVEQLGIARSEQALATADVVLLVLDGHAGWTAEDAALLARIPAQIPRILVANKADLPAGAFPQPVDVQLSALEGMGEADLVQALLERCGAAGTDGMLVALNQRQRDLAARAAEALARSQEVAAQQLPWDFWTIDLREAIRALGEITGEELTEAVLDRVFSRFCIGK.

(6S)-5-formyl-5,6,7,8-tetrahydrofolate is bound by residues R25, E86, and R126. Residues 221–373 (GLRVALVGRP…LVQALLERCG (153 aa)) form the TrmE-type G domain. N231 contributes to the K(+) binding site. GTP is bound by residues 231 to 236 (NVGKSS), 250 to 256 (TDLPGTT), 275 to 278 (DTAG), and 336 to 339 (NKAD). S235 lines the Mg(2+) pocket. Residues T250, L252, and T255 each contribute to the K(+) site. A Mg(2+)-binding site is contributed by T256. K450 lines the (6S)-5-formyl-5,6,7,8-tetrahydrofolate pocket.

This sequence belongs to the TRAFAC class TrmE-Era-EngA-EngB-Septin-like GTPase superfamily. TrmE GTPase family. Homodimer. Heterotetramer of two MnmE and two MnmG subunits. K(+) is required as a cofactor.

The protein localises to the cytoplasm. Its function is as follows. Exhibits a very high intrinsic GTPase hydrolysis rate. Involved in the addition of a carboxymethylaminomethyl (cmnm) group at the wobble position (U34) of certain tRNAs, forming tRNA-cmnm(5)s(2)U34. This is tRNA modification GTPase MnmE from Synechococcus sp. (strain CC9605).